A 333-amino-acid polypeptide reads, in one-letter code: Small GTPase-like protein LIP2 (333 aa).

Positions 11–288 (NKEHMVAPLC…YKYNTLPQHN (278 aa)) are small GTPase-like. GTP-binding positions include 29–36 (GDSGVGKS), 90–94 (DVSGH), and 160–163 (NKAD). Residues 242–253 (SPSSAWSLSHAP) are compositionally biased toward polar residues. Positions 242-265 (SPSSAWSLSHAPSQRLDEGTSDED) are disordered.

The protein belongs to the small GTPase superfamily.

The protein is Small GTPase-like protein LIP2 of Arabidopsis thaliana (Mouse-ear cress).